The chain runs to 800 residues: MASVPKRHTYGGNVVTDRDRHSLQRNNEILHPIHKNQRKHATFGPYIIGSTLGEGEFGKVKLGWTKASSSNEVPKQVAIKLIRRDTIKKDADKEIKIYREINALKHLTHPNIIYLEEVLQNSKYIGIVLEFVSGGEFYKYIQRKRRLKESSACRLFAQLISGVNYMHYKGLVHRDLKLENLLLDKHENLVITDFGFVNEFFEDNELMKTSCGSPCYAAPELVVSTKAYEARKADVWSCGVILYAMLAGYLPWDDDHENPTGDDIARLYKYITQTPLKFPEYITPIPRDLLRRILVPNPRRRINLQTIKRHVWLKPHEAFLSIQPNYWDEHLQKERPKPPNKGDVGRHSTYSSSASSYSKSRDRNSLIIESTLEQHRMSPQLATSRPASPTFSTGSKVVLNDTKNDMKESNINGERTSASCRYTRDSKGNGQTQIEQVSARHSSRGNKHTSVAGLVTIPGSPTTARTRNAPSSKLTEHVKDSSQTSFTQEEFHRIGNYHVPRSRPRPTSYYPGLSRNTADNSLADIPVNKLGSNGRLTDAKDPVPLNAIHDTNKATISNNSIMLLSEGPAAKTSPVDYHYAIGDLNHGDKPITEVIDKINKDLTHKAAENGFPRESIDPESTSTILVTKEPTNSTDEDHVESQLENVGHSSNKSDASSDKDSKKIYEKKRFSFMSLYSSLNGSRSTVESRTSKGNAPPVSSRNPSGQSNRSNIKITQQQPRNLSDRVPNPDKKINDNRIRDNAPSYAESENPGRSVRASVMVSTLREENRSELSNEGNNVEAQTSTARKVLNFFKRRSMRV.

Residues 46 to 313 (YIIGSTLGEG…LQTIKRHVWL (268 aa)) enclose the Protein kinase domain. Residues 52–60 (LGEGEFGKV) and Lys80 each bind ATP. Catalysis depends on Asp175, which acts as the Proton acceptor. Disordered regions lie at residues 331–397 (LQKE…GSKV) and 438–487 (SARH…TSFT). Low complexity predominate over residues 348–358 (STYSSSASSYS). Ser365 and Ser388 each carry phosphoserine. Polar residues-rich tracts occupy residues 380-395 (QLATSRPASPTFSTGS) and 459-473 (GSPTTARTRNAPSSK). The residue at position 521 (Ser521) is a Phosphoserine. 2 disordered regions span residues 629 to 661 (EPTNSTDEDHVESQLENVGHSSNKSDASSDKDS) and 678 to 754 (SLNG…PGRS). The span at 678 to 721 (SLNGSRSTVESRTSKGNAPPVSSRNPSGQSNRSNIKITQQQPRN) shows a compositional bias: polar residues. The span at 727–740 (PNPDKKINDNRIRD) shows a compositional bias: basic and acidic residues. Ser748 is subject to Phosphoserine.

This sequence belongs to the protein kinase superfamily. Ser/Thr protein kinase family.

The enzyme catalyses L-seryl-[protein] + ATP = O-phospho-L-seryl-[protein] + ADP + H(+). The catalysed reaction is L-threonyl-[protein] + ATP = O-phospho-L-threonyl-[protein] + ADP + H(+). Functionally, this protein is probably a serine/threonine protein kinase. In Saccharomyces cerevisiae (strain ATCC 204508 / S288c) (Baker's yeast), this protein is Serine/threonine-protein kinase KIN4 (KIN4).